A 184-amino-acid polypeptide reads, in one-letter code: MKADKQLVSTSKFLSLVLRHQPGVIGMTLDEQGWLEIDGLIANANTRGKKLTLELIHEVVATNDKKRFVLSDDGLRIRASQGHSVAGVDLNLTEANPPATLYHGTVDAFLPRIREQGLQKRSRNHVHLSADEATATNVGSRRGKPKLLLIAAQRMHQDGHIFYLSENEVWLVDSVPPTYLTFPT.

Belongs to the KptA/TPT1 family.

In terms of biological role, removes the 2'-phosphate from RNA via an intermediate in which the phosphate is ADP-ribosylated by NAD followed by a presumed transesterification to release the RNA and generate ADP-ribose 1''-2''-cyclic phosphate (APPR&gt;P). May function as an ADP-ribosylase. This is Probable RNA 2'-phosphotransferase from Rhodopirellula baltica (strain DSM 10527 / NCIMB 13988 / SH1).